A 488-amino-acid polypeptide reads, in one-letter code: Glutamyl-tRNA(Gln) amidotransferase subunit A (488 aa).

Active-site charge relay system residues include K77 and S152. Residue S176 is the Acyl-ester intermediate of the active site.

The protein belongs to the amidase family. GatA subfamily. Heterotrimer of A, B and C subunits.

It carries out the reaction L-glutamyl-tRNA(Gln) + L-glutamine + ATP + H2O = L-glutaminyl-tRNA(Gln) + L-glutamate + ADP + phosphate + H(+). Functionally, allows the formation of correctly charged Gln-tRNA(Gln) through the transamidation of misacylated Glu-tRNA(Gln) in organisms which lack glutaminyl-tRNA synthetase. The reaction takes place in the presence of glutamine and ATP through an activated gamma-phospho-Glu-tRNA(Gln). This is Glutamyl-tRNA(Gln) amidotransferase subunit A from Streptococcus pyogenes serotype M28 (strain MGAS6180).